An 828-amino-acid polypeptide reads, in one-letter code: Periplasmic nitrate reductase (828 aa).

Residues 1 to 31 (MKLSRRSFMKANAVAAAAAAAGLSVPGVARA) constitute a signal peptide (tat-type signal). One can recognise a 4Fe-4S Mo/W bis-MGD-type domain in the interval 39–95 (IKWDKAPCRFCGTGCGVLVGTQQGRVVACQGDPDAPVNRGLNCIKGYFLPKIMYGKD). Positions 46, 49, 53, and 81 each coordinate [4Fe-4S] cluster. Residues Lys83, Gln150, Asn175, Cys179, 212–219 (WGSNMAEM), 243–247 (STYQH), 262–264 (QSD), Met372, Gln376, Asn482, 508–509 (SD), Lys531, Asp558, and 718–727 (TGRVLEHWHT) contribute to the Mo-bis(molybdopterin guanine dinucleotide) site. Residue Phe794 coordinates substrate. The Mo-bis(molybdopterin guanine dinucleotide) site is built by Asn802 and Lys819.

Belongs to the prokaryotic molybdopterin-containing oxidoreductase family. NasA/NapA/NarB subfamily. Component of the periplasmic nitrate reductase NapAB complex composed of NapA and NapB. It depends on [4Fe-4S] cluster as a cofactor. Requires Mo-bis(molybdopterin guanine dinucleotide) as cofactor. In terms of processing, predicted to be exported by the Tat system. The position of the signal peptide cleavage has not been experimentally proven.

The protein localises to the periplasm. The catalysed reaction is 2 Fe(II)-[cytochrome] + nitrate + 2 H(+) = 2 Fe(III)-[cytochrome] + nitrite + H2O. In terms of biological role, catalytic subunit of the periplasmic nitrate reductase complex NapAB. Receives electrons from NapB and catalyzes the reduction of nitrate to nitrite. This Escherichia coli O1:K1 / APEC protein is Periplasmic nitrate reductase.